We begin with the raw amino-acid sequence, 877 residues long: Valine--tRNA ligase (877 aa).

Residues 46–56 carry the 'HIGH' region motif; it reads PYPTGSIHMGH. The 'KMSKS' region motif lies at 529-533; that stretch reads KMSKS. ATP is bound at residue Lys-532.

Belongs to the class-I aminoacyl-tRNA synthetase family. ValS type 2 subfamily.

Its subcellular location is the cytoplasm. It catalyses the reaction tRNA(Val) + L-valine + ATP = L-valyl-tRNA(Val) + AMP + diphosphate. Catalyzes the attachment of valine to tRNA(Val). As ValRS can inadvertently accommodate and process structurally similar amino acids such as threonine, to avoid such errors, it has a 'posttransfer' editing activity that hydrolyzes mischarged Thr-tRNA(Val) in a tRNA-dependent manner. The chain is Valine--tRNA ligase from Methanothermobacter thermautotrophicus (strain ATCC 29096 / DSM 1053 / JCM 10044 / NBRC 100330 / Delta H) (Methanobacterium thermoautotrophicum).